A 342-amino-acid chain; its full sequence is AM-toxin biosynthesis protein 12 (342 aa).

The signal sequence occupies residues 1-20 (MSLLITSLAWGALLDPEVSS).

It functions in the pathway mycotoxin biosynthesis. In terms of biological role, part of the gene clusters that mediate the biosynthesis of AM-toxins, host-selective toxins (HSTs) causing Alternaria blotch on apple, a worldwide distributed disease. AM-toxins are cyclic depsipeptides containing the 3 residues 2-hydroxy-isovaleric acid (2-HIV), dehydroalanine, L-alanine which are common for all 3 AM-toxins I to III. The fourth precursor is L-alpha-amino-methoxyphenyl-valeric acid (L-Amv) for AM-toxin I, L-alpha-amino-phenyl-valeric acid (L-Apv) for AM-toxin II, and L-alpha-amino-hydroxyphenyl-valeric acid (L-Ahv) for AM-toxin III. AM-toxins have two target sites for affecting susceptible apple cells; they cause invagination of the plasma membrane and electrolyte loss and chloroplast disorganization. The non-ribosomal peptide synthetase AMT1 contains 4 catalytic modules and is responsible for activation of each residue in AM-toxin. The aldo-keto reductase AMT2 catalyzes the conversion of 2-keto-isovaleric acid (2-KIV) to 2-hydroxy-isovaleric acid (2-HIV), one of the precursor residues incorporated by AMT1 during AM-toxin biosynthesis, by reduction of its ketone to an alcohol. The cytochrome P450 monooxygenase AMT3 and the thioesterase AMT4 are also important for AM-toxin production, but their exact function within the AM-toxin biosynthesis are not known yet. Up to 21 proteins (including AMT1 to AMT4) are predicted to be involved in AM-toxin biosynthesis since their expression ishighly up-regulated in AM-toxin-producing cultures. In Alternaria alternata (Alternaria rot fungus), this protein is AM-toxin biosynthesis protein 12.